Consider the following 150-residue polypeptide: Large ribosomal subunit protein bL9 (150 aa).

Belongs to the bacterial ribosomal protein bL9 family.

Its function is as follows. Binds to the 23S rRNA. In Wolinella succinogenes (strain ATCC 29543 / DSM 1740 / CCUG 13145 / JCM 31913 / LMG 7466 / NCTC 11488 / FDC 602W) (Vibrio succinogenes), this protein is Large ribosomal subunit protein bL9.